Reading from the N-terminus, the 224-residue chain is tRNA pseudouridine synthase B (224 aa).

Aspartate 46 functions as the Nucleophile in the catalytic mechanism.

This sequence belongs to the pseudouridine synthase TruB family. Type 1 subfamily.

It catalyses the reaction uridine(55) in tRNA = pseudouridine(55) in tRNA. In terms of biological role, responsible for synthesis of pseudouridine from uracil-55 in the psi GC loop of transfer RNAs. This is tRNA pseudouridine synthase B from Methylococcus capsulatus (strain ATCC 33009 / NCIMB 11132 / Bath).